Consider the following 321-residue polypeptide: uncharacterized protein (321 aa).

The N-terminal stretch at 1 to 22 is a signal peptide; the sequence is MKSIYKYTFMLFVFLFGTLMMA.

Belongs to the bacterial solute-binding protein 1 family. WtpA subfamily.

This is an uncharacterized protein from Petrotoga mobilis (strain DSM 10674 / SJ95).